The primary structure comprises 124 residues: Small ribosomal subunit protein uS12 (124 aa).

Aspartate 89 is subject to 3-methylthioaspartic acid.

Belongs to the universal ribosomal protein uS12 family. As to quaternary structure, part of the 30S ribosomal subunit. Contacts proteins S8 and S17. May interact with IF1 in the 30S initiation complex.

With S4 and S5 plays an important role in translational accuracy. Its function is as follows. Interacts with and stabilizes bases of the 16S rRNA that are involved in tRNA selection in the A site and with the mRNA backbone. Located at the interface of the 30S and 50S subunits, it traverses the body of the 30S subunit contacting proteins on the other side and probably holding the rRNA structure together. The combined cluster of proteins S8, S12 and S17 appears to hold together the shoulder and platform of the 30S subunit. This is Small ribosomal subunit protein uS12 from Pasteurella multocida (strain Pm70).